The primary structure comprises 878 residues: Aminopeptidase M1-C (878 aa).

Positions 102-209 (LGEGVLAMDF…MSTYLVAIVV (108 aa)) are required for membrane association. Substrate is bound by residues glutamate 142 and 275–279 (GAMEN). Histidine 311 provides a ligand contact to Zn(2+). Catalysis depends on glutamate 312, which acts as the Proton acceptor. Histidine 315 and glutamate 334 together coordinate Zn(2+). The short motif at 726 to 727 (LL) is the Dileucine internalization motif element.

Belongs to the peptidase M1 family. Homodimer. Zn(2+) is required as a cofactor.

The protein resides in the membrane. It is found in the microsome membrane. It localises to the cytoplasm. It catalyses the reaction Release of an N-terminal amino acid, Xaa-|-Yaa- from a peptide, amide or arylamide. Xaa is preferably Ala, but may be most amino acids including Pro (slow action). When a terminal hydrophobic residue is followed by a prolyl residue, the two may be released as an intact Xaa-Pro dipeptide.. The protein is Aminopeptidase M1-C of Oryza sativa subsp. japonica (Rice).